An 800-amino-acid chain; its full sequence is Phenylalanine--tRNA ligase beta subunit (800 aa).

The tRNA-binding domain maps to Ser39–Leu154. Residues Ser408–Ser483 form the B5 domain. Residues Asp461, Asp467, Glu470, and Glu471 each contribute to the Mg(2+) site. Residues Pro708–Arg800 form the FDX-ACB domain.

Belongs to the phenylalanyl-tRNA synthetase beta subunit family. Type 1 subfamily. In terms of assembly, tetramer of two alpha and two beta subunits. Requires Mg(2+) as cofactor.

Its subcellular location is the cytoplasm. The catalysed reaction is tRNA(Phe) + L-phenylalanine + ATP = L-phenylalanyl-tRNA(Phe) + AMP + diphosphate + H(+). In Staphylococcus haemolyticus (strain JCSC1435), this protein is Phenylalanine--tRNA ligase beta subunit.